A 449-amino-acid chain; its full sequence is Heterogeneous nuclear ribonucleoprotein H (449 aa).

Met-1 is modified (N-acetylmethionine; in Heterogeneous nuclear ribonucleoprotein H; alternate). Position 2 is an N-acetylmethionine; in Heterogeneous nuclear ribonucleoprotein H, N-terminally processed (Met-2). An RRM 1 domain is found at Phe-11–Asn-90. Ser-23 carries the post-translational modification Phosphoserine. A Glycyl lysine isopeptide (Lys-Gly) (interchain with G-Cter in SUMO2) cross-link involves residue Lys-35. 2 positions are modified to phosphoserine: Ser-54 and Ser-63. Glycyl lysine isopeptide (Lys-Gly) (interchain with G-Cter in SUMO2) cross-links involve residues Lys-87 and Lys-98. The region spanning Gly-111–Arg-188 is the RRM 2 domain. Dimethylated arginine; alternate is present on Arg-233. Residue Arg-233 is modified to Omega-N-methylarginine; alternate. Residues Gly-234–Tyr-249 form a 1-1 repeat. The 2 X 16 AA Gly-rich approximate repeats stretch occupies residues Gly-234–Tyr-433. Tyr-246 carries the phosphotyrosine modification. The RRM 3 domain occupies His-289 to Thr-364. Position 310 is a phosphoserine (Ser-310). 3 tandem repeats follow at residues His-354–Tyr-372, His-374–Tyr-392, and Gly-418–Tyr-433. A 2 X 19 AA perfect repeats region spans residues His-354 to Tyr-392.

In terms of assembly, part of a ternary complex containing FUBP2, PTBP1, PTBP2 and HNRNPH1. Identified in the spliceosome C complex. Interacts with IGF2BP1. Interacts with CUGBP1; the interaction is RNA-dependent. Interacts with MBNL1; the interaction in RNA-independent. As to expression, expressed ubiquitously.

The protein localises to the nucleus. It is found in the nucleoplasm. In terms of biological role, this protein is a component of the heterogeneous nuclear ribonucleoprotein (hnRNP) complexes which provide the substrate for the processing events that pre-mRNAs undergo before becoming functional, translatable mRNAs in the cytoplasm. Mediates pre-mRNA alternative splicing regulation. Inhibits, together with CUGBP1, insulin receptor (IR) pre-mRNA exon 11 inclusion in myoblast. Binds to the IR RNA. Binds poly(RG). The protein is Heterogeneous nuclear ribonucleoprotein H (HNRNPH1) of Homo sapiens (Human).